Reading from the N-terminus, the 953-residue chain is Isoleucine--tRNA ligase (953 aa).

A 'HIGH' region motif is present at residues 57 to 67 (PYANGDIHIGH). An L-isoleucyl-5'-AMP-binding site is contributed by Glu582. Residues 623 to 627 (KMSKS) carry the 'KMSKS' region motif. An ATP-binding site is contributed by Lys626. The Zn(2+) site is built by Cys916, Cys919, Cys936, and Cys939.

Belongs to the class-I aminoacyl-tRNA synthetase family. IleS type 1 subfamily. As to quaternary structure, monomer. Zn(2+) serves as cofactor.

It is found in the cytoplasm. It catalyses the reaction tRNA(Ile) + L-isoleucine + ATP = L-isoleucyl-tRNA(Ile) + AMP + diphosphate. Catalyzes the attachment of isoleucine to tRNA(Ile). As IleRS can inadvertently accommodate and process structurally similar amino acids such as valine, to avoid such errors it has two additional distinct tRNA(Ile)-dependent editing activities. One activity is designated as 'pretransfer' editing and involves the hydrolysis of activated Val-AMP. The other activity is designated 'posttransfer' editing and involves deacylation of mischarged Val-tRNA(Ile). In Bordetella pertussis (strain Tohama I / ATCC BAA-589 / NCTC 13251), this protein is Isoleucine--tRNA ligase.